Here is a 504-residue protein sequence, read N- to C-terminus: Anaerobic nitric oxide reductase transcription regulator NorR (504 aa).

Position 57 is a 4-aspartylphosphate (D57). In terms of domain architecture, Sigma-54 factor interaction spans 187–416; that stretch reads MIGLSPGMTQ…LEHAIHRAVV (230 aa). Residues 215–222 and 278–287 each bind ATP; these read GETGTGKE and ADNGTLFLDE. Residues 479–498 constitute a DNA-binding region (H-T-H motif); sequence WAACARMLETDVANLHRLAK.

It participates in nitrogen metabolism; nitric oxide reduction. Required for the expression of anaerobic nitric oxide (NO) reductase, acts as a transcriptional activator for at least the norVW operon. Activation also requires sigma-54. The sequence is that of Anaerobic nitric oxide reductase transcription regulator NorR from Escherichia coli O157:H7.